A 189-amino-acid polypeptide reads, in one-letter code: GTPase NRas (189 aa).

GTP is bound by residues 10–18 (GAGGVGKSA) and 29–30 (VD). Residues 32–40 (YDPTIEDSY) carry the Effector region motif. 57–61 (DTAGQ) provides a ligand contact to GTP. Ser-89 carries the post-translational modification Phosphoserine. 116–119 (NKCD) is a GTP binding site. A hypervariable region region spans residues 166–185 (YRMKKLNSSDDGTQGCMGLP). Lys-170 participates in a covalent cross-link: Glycyl lysine isopeptide (Lys-Gly) (interchain with G-Cter in ubiquitin). A lipid anchor (S-palmitoyl cysteine) is attached at Cys-181. A lipid anchor (S-farnesyl cysteine) is attached at Cys-186. Residues 187–189 (VVM) constitute a propeptide, removed in mature form.

Belongs to the small GTPase superfamily. Ras family. Interacts (active GTP-bound form preferentially) with RGS14. Interacts (active GTP-bound form) with RASSF7. Interacts (active GTP-bound form) with both SHOC2 and PP1c (all isoforms) to form a tertiary complex; SHOC2 and PP1c preferably bind M-Ras/MRAS, but they also bind K-Ras/KRAS, N-Ras/NRAS and H-Ras/HRAS. Post-translationally, palmitoylated by the ZDHHC9-GOLGA7 complex. Depalmitoylated by ABHD17A, ABHD17B and ABHD17C. A continuous cycle of de- and re-palmitoylation regulates rapid exchange between plasma membrane and Golgi. In terms of processing, acetylation at Lys-104 prevents interaction with guanine nucleotide exchange factors (GEFs). Ubiquitinated by the BCR(LZTR1) E3 ubiquitin ligase complex at Lys-170 in a non-degradative manner, leading to inhibit Ras signaling by decreasing Ras association with membranes. Post-translationally, phosphorylation at Ser-89 enhances NRAS association with its downstream effectors.

The protein resides in the cell membrane. Its subcellular location is the golgi apparatus membrane. The enzyme catalyses GTP + H2O = GDP + phosphate + H(+). Its activity is regulated as follows. Alternates between an inactive form bound to GDP and an active form bound to GTP. Activated by a guanine nucleotide-exchange factor (GEF) and inactivated by a GTPase-activating protein (GAP). Ras proteins bind GDP/GTP and possess intrinsic GTPase activity. The chain is GTPase NRas (NRAS) from Pongo abelii (Sumatran orangutan).